The sequence spans 279 residues: Elongation factor Ts (279 aa).

The involved in Mg(2+) ion dislocation from EF-Tu stretch occupies residues 80-83; sequence TDFV.

It belongs to the EF-Ts family.

It is found in the cytoplasm. Associates with the EF-Tu.GDP complex and induces the exchange of GDP to GTP. It remains bound to the aminoacyl-tRNA.EF-Tu.GTP complex up to the GTP hydrolysis stage on the ribosome. This Borrelia garinii subsp. bavariensis (strain ATCC BAA-2496 / DSM 23469 / PBi) (Borreliella bavariensis) protein is Elongation factor Ts.